Here is a 95-residue protein sequence, read N- to C-terminus: Integration host factor subunit beta (95 aa).

The disordered stretch occupies residues Ser-52–Asp-95. Basic and acidic residues predominate over residues Pro-82–Asp-95.

Belongs to the bacterial histone-like protein family. Heterodimer of an alpha and a beta chain.

Functionally, this protein is one of the two subunits of integration host factor, a specific DNA-binding protein that functions in genetic recombination as well as in transcriptional and translational control. This chain is Integration host factor subunit beta, found in Methylococcus capsulatus (strain ATCC 33009 / NCIMB 11132 / Bath).